The chain runs to 108 residues: ATP-dependent Clp protease adapter protein ClpS (108 aa).

Belongs to the ClpS family. In terms of assembly, binds to the N-terminal domain of the chaperone ClpA.

Its function is as follows. Involved in the modulation of the specificity of the ClpAP-mediated ATP-dependent protein degradation. This chain is ATP-dependent Clp protease adapter protein ClpS, found in Ralstonia pickettii (strain 12J).